The primary structure comprises 64 residues: Alpha-mammal toxin BmK-M8 (64 aa).

Residues 2 to 64 (RDAYIADSEN…ERIKEPGKCG (63 aa)) enclose the LCN-type CS-alpha/beta domain. 4 disulfide bridges follow: cysteine 12/cysteine 63, cysteine 16/cysteine 36, cysteine 22/cysteine 46, and cysteine 26/cysteine 48.

Belongs to the long (4 C-C) scorpion toxin superfamily. Sodium channel inhibitor family. Alpha subfamily. Expressed by the venom gland.

The protein localises to the secreted. Alpha toxins bind voltage-independently at site-3 of sodium channels (Nav) and inhibit the inactivation of the activated channels, thereby blocking neuronal transmission. This acidic toxin has a weak toxicity and is active against mammals. The chain is Alpha-mammal toxin BmK-M8 from Olivierus martensii (Manchurian scorpion).